The sequence spans 929 residues: Isoleucine--tRNA ligase (929 aa).

The 'HIGH' region signature appears at 58–68; sequence PYANGDIHIGH. Residue Glu563 coordinates L-isoleucyl-5'-AMP. The 'KMSKS' region motif lies at 605–609; that stretch reads KMSKS. Position 608 (Lys608) interacts with ATP. Residues Cys892, Cys895, Cys912, and Cys915 each coordinate Zn(2+).

The protein belongs to the class-I aminoacyl-tRNA synthetase family. IleS type 1 subfamily. Monomer. The cofactor is Zn(2+).

The protein localises to the cytoplasm. The enzyme catalyses tRNA(Ile) + L-isoleucine + ATP = L-isoleucyl-tRNA(Ile) + AMP + diphosphate. Functionally, catalyzes the attachment of isoleucine to tRNA(Ile). As IleRS can inadvertently accommodate and process structurally similar amino acids such as valine, to avoid such errors it has two additional distinct tRNA(Ile)-dependent editing activities. One activity is designated as 'pretransfer' editing and involves the hydrolysis of activated Val-AMP. The other activity is designated 'posttransfer' editing and involves deacylation of mischarged Val-tRNA(Ile). This is Isoleucine--tRNA ligase from Neisseria meningitidis serogroup A / serotype 4A (strain DSM 15465 / Z2491).